A 550-amino-acid chain; its full sequence is Glucose import ATP-binding protein TsgD13 (550 aa).

ABC transporter domains lie at 7–270 and 287–533; these read LRME…VGRE and LRAR…TGGG. Residue 39-46 coordinates ATP; the sequence is GENGAGKS. Residues 529-550 form a disordered region; it reads MTGGGDATATAGAQVRGLGGSS.

This sequence belongs to the ABC transporter superfamily. In terms of assembly, the complex is composed of two ATP-binding proteins (TsgD13), two transmembrane proteins (TsgB13 and TsgC13) and a solute-binding protein (TsgA13).

Its subcellular location is the cell membrane. It carries out the reaction D-glucose(out) + ATP + H2O = D-glucose(in) + ADP + phosphate + H(+). Part of an ABC transporter complex involved in glucose import. Responsible for energy coupling to the transport system. This is Glucose import ATP-binding protein TsgD13 (tsgD13) from Haloferax volcanii (strain ATCC 29605 / DSM 3757 / JCM 8879 / NBRC 14742 / NCIMB 2012 / VKM B-1768 / DS2) (Halobacterium volcanii).